The following is a 121-amino-acid chain: Protein YxiB (121 aa).

This Bacillus subtilis (strain 168) protein is Protein YxiB (yxiB).